The sequence spans 360 residues: Photosystem II protein D1 (360 aa).

Helical transmembrane passes span 30–47, 119–134, and 143–157; these read YVGW…TAAA, HFLI…QWEL, and WICV…AAFA. H119 provides a ligand contact to chlorophyll a. Position 127 (Y127) interacts with pheophytin a. Residues D171 and E190 each contribute to the [CaMn4O5] cluster site. A helical transmembrane segment spans residues 198–219; the sequence is FHMAGVAGMFGGSLFSAMHGSL. H199 contacts chlorophyll a. Residues H216 and 265 to 266 each bind a quinone; that span reads SF. H216 serves as a coordination point for Fe cation. H273 contributes to the Fe cation binding site. A helical transmembrane segment spans residues 275 to 289; that stretch reads FLAVFPVVCVWLTSM. [CaMn4O5] cluster-binding residues include H333, E334, D343, and A345. The propeptide occupies 346-360; it reads AAESTTVALSAPAIG.

It belongs to the reaction center PufL/M/PsbA/D family. PSII is composed of 1 copy each of membrane proteins PsbA, PsbB, PsbC, PsbD, PsbE, PsbF, PsbH, PsbI, PsbJ, PsbK, PsbL, PsbM, PsbT, PsbX, PsbY, Psb30/Ycf12, peripheral proteins PsbO, CyanoQ (PsbQ), PsbU, PsbV and a large number of cofactors. It forms dimeric complexes. The cofactor is The D1/D2 heterodimer binds P680, chlorophylls that are the primary electron donor of PSII, and subsequent electron acceptors. It shares a non-heme iron and each subunit binds pheophytin, quinone, additional chlorophylls, carotenoids and lipids. D1 provides most of the ligands for the Mn4-Ca-O5 cluster of the oxygen-evolving complex (OEC). There is also a Cl(-1) ion associated with D1 and D2, which is required for oxygen evolution. The PSII complex binds additional chlorophylls, carotenoids and specific lipids.. Post-translationally, tyr-162 forms a radical intermediate that is referred to as redox-active TyrZ, YZ or Y-Z. C-terminally processed by CtpA; processing is essential to allow assembly of the oxygen-evolving complex and thus photosynthetic growth.

Its subcellular location is the cellular thylakoid membrane. It carries out the reaction 2 a plastoquinone + 4 hnu + 2 H2O = 2 a plastoquinol + O2. Photosystem II (PSII) is a light-driven water:plastoquinone oxidoreductase that uses light energy to abstract electrons from H(2)O, generating O(2) and a proton gradient subsequently used for ATP formation. It consists of a core antenna complex that captures photons, and an electron transfer chain that converts photonic excitation into a charge separation. The D1/D2 (PsbA/PsbD) reaction center heterodimer binds P680, the primary electron donor of PSII as well as several subsequent electron acceptors. In Prochlorococcus marinus (strain MIT 9301), this protein is Photosystem II protein D1.